The following is a 279-amino-acid chain: NLP effector protein 9 (279 aa).

The N-terminal stretch at 1–19 (MKISNLLGVLVVFLAVVKG) is a signal peptide. The short motif at 151–161 (AIMYAWYFPDI) is the Conserved undecapeptide motif element. An N-linked (GlcNAc...) asparagine glycan is attached at N176.

Belongs to the Necrosis inducing protein (NPP1) family.

It is found in the secreted. In terms of biological role, secreted effector that acts as a pathogen-associated molecular pattern (PAMP) recognized by the plant immune system. Seems not to induce necrosis in Nicotiana benthamiana leaves. In Plasmopara viticola (Downy mildew of grapevine), this protein is NLP effector protein 9.